The sequence spans 1076 residues: Regulator of G-protein signaling protein-like (1076 aa).

Residues 645 to 764 form the RGS domain; sequence NLTEVLLNTQ…LFPPHHQEVE (120 aa). The segment covering 834–852 has biased composition (polar residues); the sequence is TTAHNTSGRSAPPSTNVRS. The disordered stretch occupies residues 834-854; sequence TTAHNTSGRSAPPSTNVRSAD. The chain crosses the membrane as a helical span at residues 960 to 982; the sequence is VFHGAIMSVFPVVMYFWKRFCFW.

The protein resides in the membrane. The sequence is that of Regulator of G-protein signaling protein-like (RGSL1) from Homo sapiens (Human).